A 357-amino-acid polypeptide reads, in one-letter code: CCN family member 3 (357 aa).

Positions 1-31 are cleaved as a signal peptide; that stretch reads MQSVQSTSFCLRKQCLCLTFLLLHLLGQVAA. In terms of domain architecture, IGFBP N-terminal spans 32–105; the sequence is TQRCPPQCPG…SNQTGICTAV (74 aa). Intrachain disulfides connect Cys-35–Cys-61, Cys-39–Cys-63, Cys-43–Cys-64, Cys-50–Cys-67, Cys-75–Cys-89, and Cys-81–Cys-102. Asn-97 carries N-linked (GlcNAc...) asparagine glycosylation. In terms of domain architecture, VWFC spans 108-174; the sequence is DNCVFDGVIY…GECCEKWICG (67 aa). A TSP type-1 domain is found at 205 to 250; it reads NCIEQTTEWTACSKSCGMGFSTRVTNRNRQCEMLKQTRLCMVRPCE. The S-palmitoyl cysteine moiety is linked to residue Cys-244. 5 disulfide bridges follow: Cys-264-Cys-301, Cys-281-Cys-315, Cys-292-Cys-331, Cys-295-Cys-333, and Cys-300-Cys-337. Residues 264-338 enclose the CTCK domain; it reads CLRTKKSLKA…GTCTCHTNCP (75 aa). N-linked (GlcNAc...) asparagine glycosylation is present at Asn-280.

It belongs to the CCN family. Interacts with FBLN1. Interacts (via CTCK domain) with NOTCH1 (via the EGF-like repeat region). Interacts with GJA1/CX43. Interacts with ITGA5:ITGB1, ITGAV:ITGB3 and ITGAV:ITGB5. Interacts with ZDHHC22; the interaction may lead to CCN3 palmitoylation. May be palmitoylated on Cys-244, which is important for extracellular secretion. In terms of tissue distribution, expressed in endothelial cells (at protein level). Expressed in bone marrow and thymic cells.

Its subcellular location is the secreted. It is found in the cytoplasm. It localises to the cell junction. The protein resides in the gap junction. Its function is as follows. Immediate-early protein playing a role in various cellular processes including proliferation, adhesion, migration, differentiation and survival. Acts by binding to integrins or membrane receptors such as NOTCH1. Essential regulator of hematopoietic stem and progenitor cell function. Inhibits myogenic differentiation through the activation of Notch-signaling pathway. Inhibits vascular smooth muscle cells proliferation by increasing expression of cell-cycle regulators such as CDKN2B or CDKN1A independently of TGFB1 signaling. Ligand of integrins ITGAV:ITGB3 and ITGA5:ITGB1, acts directly upon endothelial cells to stimulate pro-angiogenic activities and induces angiogenesis. In endothelial cells, supports cell adhesion, induces directed cell migration (chemotaxis) and promotes cell survival. Also plays a role in cutaneous wound healing acting as integrin receptor ligand. Supports skin fibroblast adhesion through ITGA5:ITGB1 and ITGA6:ITGB1 and induces fibroblast chemotaxis through ITGAV:ITGB5. Seems to enhance bFGF-induced DNA synthesis in fibroblasts. Involved in bone regeneration as a negative regulator. Enhances the articular chondrocytic phenotype, whereas it repressed the one representing endochondral ossification. Impairs pancreatic beta-cell function, inhibits beta-cell proliferation and insulin secretion. Plays a role as negative regulator of endothelial pro-inflammatory activation reducing monocyte adhesion, its anti-inflammatory effects occur secondary to the inhibition of NF-kappaB signaling pathway. Contributes to the control and coordination of inflammatory processes in atherosclerosis. Attenuates inflammatory pain through regulation of IL1B- and TNF-induced MMP9, MMP2 and CCL2 expression. Inhibits MMP9 expression through ITGB1 engagement. Brain osteoanabolic hormone. Drives osteogenesis in osteochondral skeletal stem cells. During lactation, maintains the maternal skeleton and viability of offspring. This is CCN family member 3 from Homo sapiens (Human).